The sequence spans 290 residues: 6-phospho-5-dehydro-2-deoxy-D-gluconate aldolase (290 aa).

Asp85 acts as the Proton donor in catalysis. The Zn(2+) site is built by His86 and His180. Residue Gly181 coordinates dihydroxyacetone phosphate. Residue His208 participates in Zn(2+) binding. Dihydroxyacetone phosphate-binding positions include 209-211 (GAS) and 230-233 (NINT). Residue Thr233 is modified to Phosphothreonine.

This sequence belongs to the class II fructose-bisphosphate aldolase family. IolJ subfamily. The cofactor is Zn(2+).

It carries out the reaction 6-phospho-5-dehydro-2-deoxy-D-gluconate = 3-oxopropanoate + dihydroxyacetone phosphate. It functions in the pathway polyol metabolism; myo-inositol degradation into acetyl-CoA; acetyl-CoA from myo-inositol: step 6/7. Functionally, produces dihydroxyacetone phosphate (DHAP or glycerone phosphate) and malonic semialdehyde (MSA or 3-oxopropanoate) from 6-phospho-5-dehydro-2-deoxy-D-gluconate (DKGP). The chain is 6-phospho-5-dehydro-2-deoxy-D-gluconate aldolase (iolJ) from Bacillus subtilis (strain 168).